The chain runs to 314 residues: Palmitoyl-protein thioesterase 1 (314 aa).

The first 25 residues, 1 to 25, serve as a signal peptide directing secretion; sequence MISICCSRFSCILFLLFLIFSLVLS. 3 disulfide bridges follow: Cys53/Cys54, Cys104/Cys136, and Cys160/Cys168. The active-site Nucleophile is the Ser123. Asn240 is a glycosylation site (N-linked (GlcNAc...) asparagine). Active-site residues include Asp241 and His295.

The protein belongs to the palmitoyl-protein thioesterase family. In terms of tissue distribution, ubiquitously expressed.

The protein localises to the lysosome. It catalyses the reaction S-hexadecanoyl-L-cysteinyl-[protein] + H2O = L-cysteinyl-[protein] + hexadecanoate + H(+). Cleaves thioester-linked long fatty acyl groups such as palmitate from modified cysteine residues in proteins or peptides. This is Palmitoyl-protein thioesterase 1 (Ppt1) from Drosophila melanogaster (Fruit fly).